Reading from the N-terminus, the 589-residue chain is Probable arginine--tRNA ligase, cytoplasmic (589 aa).

Residues 121–123 (SPN), His-132, Tyr-332, Asp-336, and Gln-360 each bind L-arginine. Residues 121-132 (SPNIAKPFHAGH) carry the 'HIGH' region motif. An interaction with tRNA region spans residues 469–483 (DTGPYLQYAHARLCS).

It belongs to the class-I aminoacyl-tRNA synthetase family.

The protein localises to the cytoplasm. The protein resides in the cytosol. The enzyme catalyses tRNA(Arg) + L-arginine + ATP = L-arginyl-tRNA(Arg) + AMP + diphosphate. Its function is as follows. Forms part of a macromolecular complex that catalyzes the attachment of specific amino acids to cognate tRNAs during protein synthesis. The chain is Probable arginine--tRNA ligase, cytoplasmic (argS1) from Dictyostelium discoideum (Social amoeba).